A 252-amino-acid polypeptide reads, in one-letter code: MACIDLNADLGEGFGVWRLGDDEAMLRIVTSANVACGFHAGDPAGLLRVCRLAAERGVRIGAQVSYRDLVGFGRRFIDVTADDLLADVVYQIGALQAIAQTAGSAVSYVKPHGALYNTIVTNREQGAAVAAAIQLVDSTLPVLGLAGSTFFDEAARIGLRTVAEAFADRTYRPDGQLISRREPGAVLHDPAVIAQRVVTMVTTGKATAVDGTQLAVTVESICLHGDSPNAIQMATAVRDQLNAAGIDIRAFC.

It belongs to the LamB/PxpA family. In terms of assembly, forms a complex composed of PxpA, PxpB and PxpC.

It catalyses the reaction 5-oxo-L-proline + ATP + 2 H2O = L-glutamate + ADP + phosphate + H(+). In terms of biological role, catalyzes the cleavage of 5-oxoproline to form L-glutamate coupled to the hydrolysis of ATP to ADP and inorganic phosphate. The chain is 5-oxoprolinase subunit A from Mycobacterium leprae (strain Br4923).